Reading from the N-terminus, the 867-residue chain is Bifunctional isopimaradiene synthase, chloroplastic (867 aa).

The transit peptide at 1 to 68 (MALLSSSLSS…VGEGTTSLPY (68 aa)) directs the protein to the chloroplast. Residue Lys267 participates in substrate binding. 2 residues coordinate Mg(2+): Asp400 and Asp402. Positions 400–403 (DIDD) match the DXDD motif motif. Lys487 serves as a coordination point for substrate. Residues Asp619, Asp623, Asn763, Thr767, and Glu771 each contribute to the Mg(2+) site. The short motif at 619 to 623 (DDLYD) is the DDXXD motif element.

This sequence belongs to the terpene synthase family. Tpsd subfamily. Mg(2+) is required as a cofactor.

Its subcellular location is the plastid. It is found in the chloroplast. It carries out the reaction (2E,6E,10E)-geranylgeranyl diphosphate = (+)-copalyl diphosphate. The catalysed reaction is (+)-copalyl diphosphate = isopimara-7,15-diene + diphosphate. It functions in the pathway terpene metabolism; oleoresin biosynthesis. Functionally, involved in defensive oleoresin formation in conifers in response to insect attack or other injury. Involved in diterpene (C20) olefins biosynthesis. Bifunctional enzyme that catalyzes two sequential cyclizations of geranylgeranyl diphosphate (GGPP) to isopimara-7,15-diene. The chain is Bifunctional isopimaradiene synthase, chloroplastic (TPS-ISO) from Picea abies (Norway spruce).